The primary structure comprises 342 residues: Ketol-acid reductoisomerase (NADP(+)) (342 aa).

Residues 2–182 (AELFYDDDAD…GGLRAAGIKT (181 aa)) enclose the KARI N-terminal Rossmann domain. Residues 25 to 28 (YGSQ), R48, S51, S53, and 83 to 86 (DQHQ) each bind NADP(+). The active site involves H108. Position 134 (G134) interacts with NADP(+). The KARI C-terminal knotted domain maps to 183 to 328 (TFTEETETDL…RELRKLFAWV (146 aa)). Mg(2+)-binding residues include D191, E195, E227, and E231. Position 252 (S252) interacts with substrate.

It belongs to the ketol-acid reductoisomerase family. Mg(2+) serves as cofactor.

It carries out the reaction (2R)-2,3-dihydroxy-3-methylbutanoate + NADP(+) = (2S)-2-acetolactate + NADPH + H(+). It catalyses the reaction (2R,3R)-2,3-dihydroxy-3-methylpentanoate + NADP(+) = (S)-2-ethyl-2-hydroxy-3-oxobutanoate + NADPH + H(+). It participates in amino-acid biosynthesis; L-isoleucine biosynthesis; L-isoleucine from 2-oxobutanoate: step 2/4. It functions in the pathway amino-acid biosynthesis; L-valine biosynthesis; L-valine from pyruvate: step 2/4. Functionally, involved in the biosynthesis of branched-chain amino acids (BCAA). Catalyzes an alkyl-migration followed by a ketol-acid reduction of (S)-2-acetolactate (S2AL) to yield (R)-2,3-dihydroxy-isovalerate. In the isomerase reaction, S2AL is rearranged via a Mg-dependent methyl migration to produce 3-hydroxy-3-methyl-2-ketobutyrate (HMKB). In the reductase reaction, this 2-ketoacid undergoes a metal-dependent reduction by NADPH to yield (R)-2,3-dihydroxy-isovalerate. The polypeptide is Ketol-acid reductoisomerase (NADP(+)) (Beutenbergia cavernae (strain ATCC BAA-8 / DSM 12333 / CCUG 43141 / JCM 11478 / NBRC 16432 / NCIMB 13614 / HKI 0122)).